The chain runs to 1044 residues: Multiple epidermal growth factor-like domains protein 11 (1044 aa).

An N-terminal signal peptide occupies residues 1–19 (MVLSLTGLIAFSFLQATLA). At 20–848 (LNPEDPNVCS…SPALGAERHS (829 aa)) the chain is on the extracellular side. In terms of domain architecture, EMI spans 24 to 101 (DPNVCSHWES…YYESGDFCIP (78 aa)). Disulfide bonds link cysteine 28–cysteine 89, cysteine 54–cysteine 63, cysteine 88–cysteine 99, cysteine 103–cysteine 118, cysteine 120–cysteine 129, cysteine 146–cysteine 154, cysteine 148–cysteine 161, cysteine 163–cysteine 172, cysteine 185–cysteine 197, cysteine 191–cysteine 204, cysteine 206–cysteine 215, cysteine 228–cysteine 240, cysteine 234–cysteine 247, and cysteine 249–cysteine 258. EGF-like domains follow at residues 95-130 (SGDF…PDCS), 143-173 (SNRC…WRCE), 181-216 (HGKG…VYCE), 224-259 (HGAH…AVCA), 267-302 (FGQN…DRCQ), 310-345 (FGFQ…PRCQ), 399-434 (YGDG…EVCA), 442-477 (YGPN…LDCT), and 490-520 (NESC…DTCE). Asparagine 270 is a glycosylation site (N-linked (GlcNAc...) asparagine). 15 disulfides stabilise this stretch: cysteine 271-cysteine 283, cysteine 277-cysteine 290, cysteine 292-cysteine 301, cysteine 314-cysteine 326, cysteine 320-cysteine 333, cysteine 335-cysteine 344, cysteine 403-cysteine 415, cysteine 409-cysteine 422, cysteine 424-cysteine 433, cysteine 446-cysteine 458, cysteine 452-cysteine 465, cysteine 467-cysteine 476, cysteine 493-cysteine 501, cysteine 495-cysteine 508, and cysteine 510-cysteine 519. Residue asparagine 531 is glycosylated (N-linked (GlcNAc...) asparagine). EGF-like domains lie at 571 to 606 (WGPN…PLCQ), 659 to 694 (FGQD…KDCS), 707 to 737 (FHAC…LFCT), 750 to 780 (GRVC…QHCE), and 788 to 823 (FGYG…IRCD). 15 cysteine pairs are disulfide-bonded: cysteine 575-cysteine 587, cysteine 581-cysteine 594, cysteine 596-cysteine 605, cysteine 663-cysteine 675, cysteine 669-cysteine 682, cysteine 684-cysteine 693, cysteine 710-cysteine 718, cysteine 712-cysteine 725, cysteine 727-cysteine 736, cysteine 753-cysteine 761, cysteine 755-cysteine 768, cysteine 770-cysteine 779, cysteine 792-cysteine 804, cysteine 798-cysteine 811, and cysteine 813-cysteine 822. Residues 849–869 (VGAVTGIMLLLFLIVVLLGLF) traverse the membrane as a helical segment. At 870-1044 (AWHRRRQKEK…ANGPSQDKQS (175 aa)) the chain is on the cytoplasmic side. The tract at residues 1023 to 1044 (GHYDLLPVRQSPANGPSQDKQS) is disordered. A compositionally biased stretch (polar residues) spans 1033–1044 (SPANGPSQDKQS).

It belongs to the MEGF family. In terms of assembly, homomer. Does not interact with MEGF10.

The protein resides in the cell membrane. The protein localises to the basolateral cell membrane. Functionally, may regulate the mosaic spacing of specific neuron subtypes in the retina through homotypic retinal neuron repulsion. Mosaics provide a mechanism to distribute each cell type evenly across the retina, ensuring that all parts of the visual field have access to a full set of processing elements. This chain is Multiple epidermal growth factor-like domains protein 11 (MEGF11), found in Homo sapiens (Human).